The sequence spans 338 residues: MEMO1 family protein MHO1 (338 aa).

Belongs to the MEMO1 family.

The protein localises to the cytoplasm. The protein resides in the nucleus. In terms of biological role, plays a role in haploid invasive growth under conditions of nutrient insufficiency, suggesting that the function of the MEMO1 family in cell motility/invasion is conserved across species. This is MEMO1 family protein MHO1 from Saccharomyces cerevisiae (strain ATCC 204508 / S288c) (Baker's yeast).